We begin with the raw amino-acid sequence, 345 residues long: MSCDMEKTMSSVDSLPATPASEVPVLTVSPADTSLNSADVKTQEVKPEEKKPAKKRKSWGQELPVPKTNLPPRKRAKTEDEKEQRRIERVLRNRAAAQTSRERKRLEMEKLENEKIQMEQQNQFLLQRLSQMEAENNRLSQQLAQLAAEVRGSRANTPMPGSPATASPTLTPTLFKQERDELPLERIPFPTPSLSDYSPTLKPSTLAESSDVAQHPAVSVAGLEGDGSALPLFDLGSDLKHHSTDDVAAPLSDDDFNRLFHGDSSVEPDSSVFEDGLAFDVLEGGDLSAFPFDSMVNFDSEPVTLEGIEMAHGLPDETTCKTSSVQPGFGASTTRCDGQGIAAGC.

The interval 1-106 (MSCDMEKTMS…AQTSRERKRL (106 aa)) is disordered. Positions 30–40 (PADTSLNSADV) are enriched in polar residues. 2 stretches are compositionally biased toward basic and acidic residues: residues 41-51 (KTQEVKPEEKK) and 77-91 (KTED…ERVL). The bZIP domain maps to 83 to 146 (EQRRIERVLR…NRLSQQLAQL (64 aa)). The interval 85-138 (RRIERVLRNRAAAQTSRERKRLEMEKLENEKIQMEQQNQFLLQRLSQMEAENNR) is basic motif. The tract at residues 139 to 146 (LSQQLAQL) is leucine-zipper. The segment at 186-210 (RIPFPTPSLSDYSPTLKPSTLAESS) is disordered. Residues 192 to 210 (PSLSDYSPTLKPSTLAESS) show a composition bias toward polar residues.

The protein belongs to the bZIP family. Homodimer.

Its subcellular location is the nucleus. In terms of biological role, transcriptional activator involved in the unfolded protein response (UPR) pathway. Recognizes and binds to the UPR element (UPRE) in the promoter of UPR-regulated genes. Increases the synthesis of endoplasmic reticulum-resident proteins required for protein folding as well as components of the secretory pathway. The polypeptide is Transcriptional activator hacA (hacA) (Aspergillus oryzae (strain ATCC 42149 / RIB 40) (Yellow koji mold)).